A 246-amino-acid chain; its full sequence is Major prion protein (246 aa).

Positions 1–15 are cleaved as a signal peptide; sequence MLVLFVATWSDLGLC. The segment at 16-223 is interaction with GRB2, ERI3 and SYN1; it reads KKRPKPGGWN…ESQAYYQRGS (208 aa). Residues 18–102 are disordered; the sequence is RPKPGGWNTG…HKPSKPKTSM (85 aa). Repeat copies occupy residues 44-52, 53-60, 61-68, 69-76, and 77-84. Positions 44–84 are 5 X 8 AA tandem repeats of P-H-G-G-G-W-G-Q; sequence PQGGGGWGQPHGGGWGQPHGGGWGQPHGGGWGQPHGGGWGQ. Residues 45-88 are compositionally biased toward gly residues; it reads QGGGGWGQPHGGGWGQPHGGGWGQPHGGGWGQPHGGGWGQGGGT. Residues His54, Gly55, Gly56, His62, Gly63, Gly64, His70, Gly71, Gly72, His78, Gly79, and Gly80 each contribute to the Cu(2+) site. Over residues 91 to 102 the composition is skewed to basic residues; the sequence is QWHKPSKPKTSM. Cys172 and Cys207 are joined by a disulfide. N-linked (GlcNAc...) asparagine glycans are attached at residues Asn174 and Asn190. Residue Ser223 is the site of GPI-anchor amidated serine attachment. Positions 224-246 are cleaved as a propeptide — removed in mature form; it reads SMVLFSSPPVILLISFLIFLIVG.

It belongs to the prion family. In terms of assembly, monomer and homodimer. Has a tendency to aggregate into amyloid fibrils containing a cross-beta spine, formed by a steric zipper of superposed beta-strands. Soluble oligomers may represent an intermediate stage on the path to fibril formation. Copper binding may promote oligomerization. Interacts with GRB2, APP, ERI3/PRNPIP and SYN1. Mislocalized cytosolically exposed PrP interacts with MGRN1; this interaction alters MGRN1 subcellular location and causes lysosomal enlargement. Interacts with KIAA1191.

It is found in the cell membrane. The protein localises to the golgi apparatus. Its function is as follows. Its primary physiological function is unclear. Has cytoprotective activity against internal or environmental stresses. May play a role in neuronal development and synaptic plasticity. May be required for neuronal myelin sheath maintenance. May play a role in iron uptake and iron homeostasis. Soluble oligomers are toxic to cultured neuroblastoma cells and induce apoptosis (in vitro). Association with GPC1 (via its heparan sulfate chains) targets PRNP to lipid rafts. Also provides Cu(2+) or Zn(2+) for the ascorbate-mediated GPC1 deaminase degradation of its heparan sulfate side chains. This Cercocebus atys (Sooty mangabey) protein is Major prion protein (PRNP).